The chain runs to 245 residues: Thiopurine S-methyltransferase (245 aa).

The residue at position 14 (S14) is a Phosphoserine. An S-adenosyl-L-methionine-binding site is contributed by 29 to 40 (WQDKWVNGNTAF). A substrate-binding site is contributed by F40. Residue K58 is modified to N6-acetyllysine. Residues L69, E90, 134–135 (SI), and R152 contribute to the S-adenosyl-L-methionine site.

It belongs to the class I-like SAM-binding methyltransferase superfamily. TPMT family. In terms of assembly, monomer.

The protein resides in the cytoplasm. The catalysed reaction is S-adenosyl-L-methionine + a thiopurine = S-adenosyl-L-homocysteine + a thiopurine S-methylether.. This is Thiopurine S-methyltransferase (TPMT) from Pongo pygmaeus (Bornean orangutan).